An 837-amino-acid chain; its full sequence is ABC transporter A family member 8 (837 aa).

Transmembrane regions (helical) follow at residues Tyr-29 to Ile-49, Val-244 to Leu-264, Leu-303 to Gly-323, Phe-326 to Phe-346, Val-356 to Asn-376, Gly-393 to Leu-413, and Leu-455 to Ala-475. The 235-residue stretch at Ile-516–Ile-750 folds into the ABC transporter domain. Gly-553–Ser-560 is a binding site for ATP.

This sequence belongs to the ABC transporter superfamily. ABCA family.

The protein resides in the membrane. The protein is ABC transporter A family member 8 (abcA8) of Dictyostelium discoideum (Social amoeba).